A 303-amino-acid chain; its full sequence is tRNA dimethylallyltransferase (303 aa).

10–17 (GPTASGKS) contacts ATP. 12–17 (TASGKS) lines the substrate pocket. The interval 35-38 (DSMQ) is interaction with substrate tRNA.

It belongs to the IPP transferase family. In terms of assembly, monomer. Mg(2+) is required as a cofactor.

The catalysed reaction is adenosine(37) in tRNA + dimethylallyl diphosphate = N(6)-dimethylallyladenosine(37) in tRNA + diphosphate. In terms of biological role, catalyzes the transfer of a dimethylallyl group onto the adenine at position 37 in tRNAs that read codons beginning with uridine, leading to the formation of N6-(dimethylallyl)adenosine (i(6)A). The polypeptide is tRNA dimethylallyltransferase (Methylobacterium nodulans (strain LMG 21967 / CNCM I-2342 / ORS 2060)).